The sequence spans 326 residues: Probable protein phosphatase 2C 61 (326 aa).

A PPM-type phosphatase domain is found at 42–316; sequence LGSVSSLAGG…DDISVVCLSL (275 aa). Positions 77, 78, 261, and 307 each coordinate Mn(2+).

Belongs to the PP2C family. Mg(2+) is required as a cofactor. Mn(2+) serves as cofactor.

It catalyses the reaction O-phospho-L-seryl-[protein] + H2O = L-seryl-[protein] + phosphate. The enzyme catalyses O-phospho-L-threonyl-[protein] + H2O = L-threonyl-[protein] + phosphate. This chain is Probable protein phosphatase 2C 61, found in Arabidopsis thaliana (Mouse-ear cress).